The chain runs to 710 residues: MPVRRYGGRYNNSSSGVSNALSSSSTAGLRPSPSSRENSTPLSTHHDPAFLSTNHAKNEGGLCQKHHVRFREPSVEVEVEIMDDEPSRGLQKPPSRARHAADANNNSASAQCNTTRTSDYTFYTNEDQKKVYEALRSLRPLPELQEPRRVKEYSEVSIKESLYRIVEAHDVIMVAGAFFGDEGKGKTVDAVAHHPLCTCIARVNSGENAGHTVYDKAGRKFVFNLAPSGLLLPGKRNYIGPECVMDPVSFMEKEIIQLISAGIDYHDRLFIGNVCIVTPYHKLLDLLGSAANSSTLKGMAPVHGSKVMKRGIRLDHIFNDDETLRKRLEKDMETYLGLLKVKNLSDADVVRLCREENSDGVLRVPDYVIAFAQAKEKVKFLMNLYHDRVRNNPDFPARCDVIYELRAAVLRGEKVLLEGPQSYWLSNARTKFWESTTSADTTAAGLLAASQLNFQQFKSVVLNVHKAPGSSRVGIGACPSSFVPQDFFSAQNIKTLHDLPPATCANFEAIQRTLFRDGFPYSNDKAKHNGIMAPVEYSDETGDYNIGVAMAIASAQHHGECGAVTKKPRVCGFFDCVLQHEVNSIQGPYLTISALDRGDEYDKVGVTIAYVYYNPEGKQVNVNGHVYKNGDIIRAGDPVPSESALYHCHPIVKLIDGWRDNPIAAAKRRRNTPLPRGLCELLSTIEYFTNCKVLSIGNGPNGDDIIYLRQ.

Disordered stretches follow at residues 1–57 (MPVR…NHAK) and 82–112 (MDDEPSRGLQKPPSRARHAADANNNSASAQC). The segment covering 11–25 (NNSSSGVSNALSSSS) has biased composition (low complexity). The span at 32–43 (SPSSRENSTPLS) shows a compositional bias: polar residues. Residues 180–186 (GDEGKGK) and 210–212 (GHT) each bind GTP. Catalysis depends on Asp-181, which acts as the Proton acceptor. The Mg(2+) site is built by Asp-181 and Gly-210. Residues 181 to 184 (DEGK), 208 to 211 (NAGH), Thr-295, Lys-309, Gln-421, Thr-437, and Lys-567 contribute to the IMP site. His-211 acts as the Proton donor in catalysis. A substrate-binding site is contributed by 563 to 569 (AVTKKPR). GTP contacts are provided by residues Arg-569 and 697-699 (GNG).

The protein belongs to the adenylosuccinate synthetase family. Homodimer. Mg(2+) is required as a cofactor.

The protein resides in the cytoplasm. The catalysed reaction is IMP + L-aspartate + GTP = N(6)-(1,2-dicarboxyethyl)-AMP + GDP + phosphate + 2 H(+). The protein operates within purine metabolism; AMP biosynthesis via de novo pathway; AMP from IMP: step 1/2. Functionally, plays an important role in the salvage pathway for purine nucleotide biosynthesis. Catalyzes the first committed step in the biosynthesis of AMP from IMP. This chain is Adenylosuccinate synthetase, found in Leishmania braziliensis.